Consider the following 378-residue polypeptide: Cysteine synthase (378 aa).

Residues N10–E31 form a disordered region. Residues S15–N28 are compositionally biased toward low complexity. An N6-(pyridoxal phosphate)lysine modification is found at K79. Pyridoxal 5'-phosphate-binding positions include G215 to T219 and S319.

It belongs to the cysteine synthase/cystathionine beta-synthase family. Pyridoxal 5'-phosphate serves as cofactor.

The enzyme catalyses O-acetyl-L-serine + hydrogen sulfide = L-cysteine + acetate. It functions in the pathway amino-acid biosynthesis; L-cysteine biosynthesis; L-cysteine from L-serine: step 2/2. This chain is Cysteine synthase (cysK), found in Dictyostelium discoideum (Social amoeba).